The sequence spans 476 residues: UDP-N-acetylmuramate--L-alanine ligase (476 aa).

G121–T127 provides a ligand contact to ATP.

It belongs to the MurCDEF family.

Its subcellular location is the cytoplasm. The catalysed reaction is UDP-N-acetyl-alpha-D-muramate + L-alanine + ATP = UDP-N-acetyl-alpha-D-muramoyl-L-alanine + ADP + phosphate + H(+). Its pathway is cell wall biogenesis; peptidoglycan biosynthesis. Its function is as follows. Cell wall formation. This Clavibacter michiganensis subsp. michiganensis (strain NCPPB 382) protein is UDP-N-acetylmuramate--L-alanine ligase.